Here is a 441-residue protein sequence, read N- to C-terminus: BTB/POZ domain-containing protein At3g05675 (441 aa).

The BTB domain maps to S20–E98.

Its pathway is protein modification; protein ubiquitination. May act as a substrate-specific adapter of an E3 ubiquitin-protein ligase complex (CUL3-RBX1-BTB) which mediates the ubiquitination and subsequent proteasomal degradation of target proteins. This is BTB/POZ domain-containing protein At3g05675 from Arabidopsis thaliana (Mouse-ear cress).